The primary structure comprises 166 residues: Ribosome maturation factor RimM (166 aa).

The PRC barrel domain occupies Gly94–Leu166.

It belongs to the RimM family. In terms of assembly, binds ribosomal protein uS19.

It is found in the cytoplasm. In terms of biological role, an accessory protein needed during the final step in the assembly of 30S ribosomal subunit, possibly for assembly of the head region. Essential for efficient processing of 16S rRNA. May be needed both before and after RbfA during the maturation of 16S rRNA. It has affinity for free ribosomal 30S subunits but not for 70S ribosomes. The sequence is that of Ribosome maturation factor RimM from Syntrophus aciditrophicus (strain SB).